Consider the following 411-residue polypeptide: LL-diaminopimelate aminotransferase (411 aa).

Tyr15 and Gly42 together coordinate substrate. Pyridoxal 5'-phosphate-binding positions include Tyr72, 108–109, Tyr132, Asn187, Tyr218, and 246–248; these read SK and SFS. Positions 109, 132, and 187 each coordinate substrate. The residue at position 249 (Lys249) is an N6-(pyridoxal phosphate)lysine. 2 residues coordinate pyridoxal 5'-phosphate: Arg257 and Asn292. Residues Asn292 and Arg388 each contribute to the substrate site.

The protein belongs to the class-I pyridoxal-phosphate-dependent aminotransferase family. LL-diaminopimelate aminotransferase subfamily. As to quaternary structure, homodimer. The cofactor is pyridoxal 5'-phosphate.

The catalysed reaction is (2S,6S)-2,6-diaminopimelate + 2-oxoglutarate = (S)-2,3,4,5-tetrahydrodipicolinate + L-glutamate + H2O + H(+). It functions in the pathway amino-acid biosynthesis; L-lysine biosynthesis via DAP pathway; LL-2,6-diaminopimelate from (S)-tetrahydrodipicolinate (aminotransferase route): step 1/1. Involved in the synthesis of meso-diaminopimelate (m-DAP or DL-DAP), required for both lysine and peptidoglycan biosynthesis. Catalyzes the direct conversion of tetrahydrodipicolinate to LL-diaminopimelate. This Cyanothece sp. (strain PCC 7425 / ATCC 29141) protein is LL-diaminopimelate aminotransferase.